Consider the following 37-residue polypeptide: MIEPFLLGIILGLIPITLIGLFVTAYLQYRRGDQLDF.

A helical membrane pass occupies residues 5-25 (FLLGIILGLIPITLIGLFVTA).

This sequence belongs to the PetG family. In terms of assembly, the 4 large subunits of the cytochrome b6-f complex are cytochrome b6, subunit IV (17 kDa polypeptide, PetD), cytochrome f and the Rieske protein, while the 4 small subunits are PetG, PetL, PetM and PetN. The complex functions as a dimer.

Its subcellular location is the plastid membrane. In terms of biological role, component of the cytochrome b6-f complex, which mediates electron transfer between photosystem II (PSII) and photosystem I (PSI), cyclic electron flow around PSI, and state transitions. PetG is required for either the stability or assembly of the cytochrome b6-f complex. The sequence is that of Cytochrome b6-f complex subunit 5 from Cuscuta obtusiflora (Peruvian dodder).